Here is a 305-residue protein sequence, read N- to C-terminus: Small ribosomal subunit protein bS1B (305 aa).

S1 motif domains are found at residues Gly-29–Arg-98, Gly-116–Arg-180, and Gly-194–Arg-262.

Belongs to the bacterial ribosomal protein bS1 family.

In terms of biological role, binds mRNA. This Synechocystis sp. (strain ATCC 27184 / PCC 6803 / Kazusa) protein is Small ribosomal subunit protein bS1B (rps1b).